A 382-amino-acid chain; its full sequence is Mannan endo-1,4-beta-mannosidase (382 aa).

An N-terminal signal peptide occupies residues 1-19 (MVKLFSFLLLVWVASPAFS). Substrate is bound by residues Trp-83, Asn-144, 147–151 (WDESK), and Asn-180. Glu-181 acts as the Proton donor/acceptor in catalysis. Positions 187, 204, 208, 243, 282, and 284 each coordinate substrate. A disulfide bridge links Cys-195 with Cys-262. Glu-312 serves as the catalytic Nucleophile. Residues Cys-317 and Cys-349 are joined by a disulfide bond. Residues Trp-341 and Asp-348 each contribute to the substrate site. Residues 346-350 (GGDCS) are involved in stabilization of the transition state.

This sequence belongs to the glycosyl hydrolase 5 (cellulase A) family. In terms of assembly, monomer.

It localises to the secreted. The catalysed reaction is Random hydrolysis of (1-&gt;4)-beta-D-mannosidic linkages in mannans, galactomannans and glucomannans.. Activated particularly by Ca(2+) and Zn(2+), and to a lesser extent by Na(+), K(+), Mg(2+) and Cu(2+). Activation effect of the divalent metal ions Ca(2+), Zn(2+), Mg(2+) and Cu(2+) is reduced significantly by the addition of EDTA. Strongly inhibited by Mn(2+), Hg(2+) and Ag(+). Its function is as follows. Hydrolyzes 1,4-beta linked polysaccharide backbones of mannans. Has high activity toward locust bean gum. Also active toward konjac and beta-1,4-mannan. Hydrolyzes mannotetraose (M4) and mannopentaose (M5) to mannobiose (M2) and mannotriose (M3) with a little production of mannose (M1). Hydrolyzes beta-1,4-mannan to M2, M3 and M4. Hardly hydrolyzes M2 and M3. Does not hydrolyze p-nitrophenyl-beta-D-mannopyranoside, gua-gum, carboxymethyl cellulose, soluble starch or laminarin. The polypeptide is Mannan endo-1,4-beta-mannosidase (Cryptopygus antarcticus (Antarctic springtail)).